The chain runs to 150 residues: Large ribosomal subunit protein bL9 (150 aa).

Belongs to the bacterial ribosomal protein bL9 family.

In terms of biological role, binds to the 23S rRNA. The sequence is that of Large ribosomal subunit protein bL9 from Pseudoalteromonas atlantica (strain T6c / ATCC BAA-1087).